A 395-amino-acid chain; its full sequence is Elongation factor Tu (395 aa).

The tr-type G domain maps to 6–205; it reads KPHINVGTIG…NALEKIDLPI (200 aa). A G1 region spans residues 15–22; sequence GHVDHGKT. 15 to 22 serves as a coordination point for GTP; it reads GHVDHGKT. Residue T22 coordinates Mg(2+). Residues 59–63 form a G2 region; the sequence is GITIS. The interval 80 to 83 is G3; it reads DCPG. Residues 80-84 and 135-138 each bind GTP; these read DCPGH and NKCD. The tract at residues 135–138 is G4; that stretch reads NKCD. Positions 173 to 175 are G5; the sequence is SAV.

The protein belongs to the TRAFAC class translation factor GTPase superfamily. Classic translation factor GTPase family. EF-Tu/EF-1A subfamily. As to quaternary structure, monomer.

It localises to the cytoplasm. The catalysed reaction is GTP + H2O = GDP + phosphate + H(+). GTP hydrolase that promotes the GTP-dependent binding of aminoacyl-tRNA to the A-site of ribosomes during protein biosynthesis. This is Elongation factor Tu from Ehrlichia ruminantium (strain Gardel).